Reading from the N-terminus, the 94-residue chain is Selenoprotein K (94 aa).

The chain crosses the membrane as a helical span at residues 20-42 (LSLITDFFWGIAEFVVLFFKTLL). Positions 47 to 94 (KKGRGYRNSSDSRYDDGRGPPGNPPRRMGRISHLHGPSPPPMAGGUGR) are disordered. A non-standard amino acid (selenocysteine) is located at residue Sec-92.

The protein belongs to the selenoprotein K family. In terms of assembly, interacts with DERL1, DERL2, DERL3 and SELENOS. The SELENOK-SELENOS complex interacts with VCP. Interacts with ZDHHC6. Post-translationally, cleaved by CAPN2/m-calpain in resting macrophages but not in activated macrophages. Macrophage activation up-regulates expression of the calpain inhibitor CAST/calpastatin, resulting in inhibition of CAPN2 activity. Truncated SELENOK proteins produced by failed UGA/Sec decoding are ubiquitinated by the CRL2(KLHDC2) complex, which recognizes the diglycine (Gly-Gly) at the C-terminus of truncated SELENOK proteins.

The protein localises to the endoplasmic reticulum membrane. It is found in the cell membrane. Required for Ca(2+) flux in immune cells and plays a role in T-cell proliferation and in T-cell and neutrophil migration. Involved in endoplasmic reticulum-associated degradation (ERAD) of soluble glycosylated proteins. Required for palmitoylation and cell surface expression of CD36 and involved in macrophage uptake of low-density lipoprotein and in foam cell formation. Together with ZDHHC6, required for palmitoylation of ITPR1 in immune cells, leading to regulate ITPR1 stability and function. Plays a role in protection of cells from ER stress-induced apoptosis. Protects cells from oxidative stress when overexpressed in cardiomyocytes. The chain is Selenoprotein K from Chinchilla lanigera (Long-tailed chinchilla).